The chain runs to 1039 residues: uncharacterized protein (1039 aa).

Basic residues predominate over residues 1-19 (MSLLMAHRKSKSSQRKLRN). The interval 1–38 (MSLLMAHRKSKSSQRKLRNRSSSLTPQKRRIRASKGSH) is disordered.

This is an uncharacterized protein from Sinorhizobium fredii (strain NBRC 101917 / NGR234).